Reading from the N-terminus, the 568-residue chain is 2-succinyl-5-enolpyruvyl-6-hydroxy-3-cyclohexene-1-carboxylate synthase (568 aa).

It belongs to the TPP enzyme family. MenD subfamily. As to quaternary structure, homodimer. Mg(2+) serves as cofactor. Mn(2+) is required as a cofactor. The cofactor is thiamine diphosphate.

It catalyses the reaction isochorismate + 2-oxoglutarate + H(+) = 5-enolpyruvoyl-6-hydroxy-2-succinyl-cyclohex-3-ene-1-carboxylate + CO2. It functions in the pathway quinol/quinone metabolism; 1,4-dihydroxy-2-naphthoate biosynthesis; 1,4-dihydroxy-2-naphthoate from chorismate: step 2/7. The protein operates within quinol/quinone metabolism; menaquinone biosynthesis. Its function is as follows. Catalyzes the thiamine diphosphate-dependent decarboxylation of 2-oxoglutarate and the subsequent addition of the resulting succinic semialdehyde-thiamine pyrophosphate anion to isochorismate to yield 2-succinyl-5-enolpyruvyl-6-hydroxy-3-cyclohexene-1-carboxylate (SEPHCHC). This is 2-succinyl-5-enolpyruvyl-6-hydroxy-3-cyclohexene-1-carboxylate synthase from Haemophilus influenzae (strain 86-028NP).